The primary structure comprises 389 residues: Rhizopuspepsin-1 (389 aa).

The signal sequence occupies residues 1 to 21; the sequence is MKFTLISSCVALAAMTLAVEA. A propeptide spans 22 to 66 (activation peptide); sequence APNGKKINIPLAKNNSYKPSAKNALNKALAKYNRRKVGSGGITTE. A Peptidase A1 domain is found at 82 to 385; it reads YYGEVTVGTP…NQEVPEVQIA (304 aa). The active site involves aspartate 100. Cysteine 113 and cysteine 116 are disulfide-bonded. The active site involves aspartate 283. Residues cysteine 317 and cysteine 350 are joined by a disulfide bond.

Belongs to the peptidase A1 family.

It catalyses the reaction Hydrolysis of proteins with broad specificity similar to that of pepsin A, preferring hydrophobic residues at P1 and P1'. Clots milk and activates trypsinogen. Does not cleave 4-Gln-|-His-5, but does cleave 10-His-|-Leu-11 and 12-Val-|-Glu-13 in B chain of insulin.. The polypeptide is Rhizopuspepsin-1 (RNAP) (Rhizopus niveus).